A 321-amino-acid chain; its full sequence is Olfactory receptor 3A2 (321 aa).

Residues 1 to 35 (MSLQKLMEPEAGTNRTAVAEFILLGLVQTEEMQPV) are Extracellular-facing. N-linked (GlcNAc...) asparagine glycosylation is present at N14. The chain crosses the membrane as a helical span at residues 36 to 58 (VFVLLLFAYLVTTGGNLSILAAV). Residues 59-66 (LVEPKLHA) are Cytoplasmic-facing. The helical transmembrane segment at 67–88 (PMYFFLGNLSVLDVGCITVTVP) threads the bilayer. Residues 89 to 109 (AMLGRLLSHKSTISYDACLSQ) are Extracellular-facing. A disulfide bridge links C106 with C198. A helical membrane pass occupies residues 110–129 (LFFFHLLAGMDCFLLTAMAY). The Cytoplasmic segment spans residues 130–149 (DRLLAICQPLTYSTRMSQTV). Residues 150 to 167 (QRMLVAASLACAFTNALT) form a helical membrane-spanning segment. Residues 168 to 205 (HTVAMSTLNFCGPNEVNHFYCDLPQLFQLSCSSTQLNE) lie on the Extracellular side of the membrane. A helical transmembrane segment spans residues 206–229 (LLLFAVGFIMAGTPLVLIITAYSH). The Cytoplasmic portion of the chain corresponds to 230-246 (VAAAVLRIRSVEGRKKA). A helical transmembrane segment spans residues 247-270 (FSTCGSHLTVVCLFFGRGIFNYMR). Residues 271–281 (LGSEEASDKDK) lie on the Extracellular side of the membrane. A helical membrane pass occupies residues 282-301 (GVGVFNTVINPMLNPLIYSL). Topologically, residues 302–321 (RNPDVQGALWQIFLGRRSLT) are cytoplasmic.

Belongs to the G-protein coupled receptor 1 family.

The protein localises to the cell membrane. Odorant receptor. The chain is Olfactory receptor 3A2 (OR3A2) from Homo sapiens (Human).